The sequence spans 70 residues: ATP synthase subunit c (70 aa).

The next 2 membrane-spanning stretches (helical) occupy residues 1-21 and 47-67; these read MNFL…SYGN and FIGV…SFLI.

Belongs to the ATPase C chain family. In terms of assembly, F-type ATPases have 2 components, F(1) - the catalytic core - and F(0) - the membrane proton channel. F(1) has five subunits: alpha(3), beta(3), gamma(1), delta(1), epsilon(1). F(0) has three main subunits: a(1), b(2) and c(10-14). The alpha and beta chains form an alternating ring which encloses part of the gamma chain. F(1) is attached to F(0) by a central stalk formed by the gamma and epsilon chains, while a peripheral stalk is formed by the delta and b chains.

The protein localises to the cell membrane. In terms of biological role, f(1)F(0) ATP synthase produces ATP from ADP in the presence of a proton or sodium gradient. F-type ATPases consist of two structural domains, F(1) containing the extramembraneous catalytic core and F(0) containing the membrane proton channel, linked together by a central stalk and a peripheral stalk. During catalysis, ATP synthesis in the catalytic domain of F(1) is coupled via a rotary mechanism of the central stalk subunits to proton translocation. Functionally, key component of the F(0) channel; it plays a direct role in translocation across the membrane. A homomeric c-ring of between 10-14 subunits forms the central stalk rotor element with the F(1) delta and epsilon subunits. This Latilactobacillus sakei subsp. sakei (strain 23K) (Lactobacillus sakei subsp. sakei) protein is ATP synthase subunit c.